The chain runs to 336 residues: Glyceraldehyde-3-phosphate dehydrogenase 1 (336 aa).

NAD(+) is bound by residues 12–13 (RI), D34, and S120. Residues 150–152 (SCT), T181, R198, 211–212 (TG), and R234 contribute to the D-glyceraldehyde 3-phosphate site. C151 (nucleophile) is an active-site residue. N316 is an NAD(+) binding site.

It belongs to the glyceraldehyde-3-phosphate dehydrogenase family. As to quaternary structure, homotetramer.

It is found in the cytoplasm. The enzyme catalyses D-glyceraldehyde 3-phosphate + phosphate + NAD(+) = (2R)-3-phospho-glyceroyl phosphate + NADH + H(+). It participates in carbohydrate degradation; glycolysis; pyruvate from D-glyceraldehyde 3-phosphate: step 1/5. Catalyzes the oxidative phosphorylation of glyceraldehyde 3-phosphate (G3P) to 1,3-bisphosphoglycerate (BPG) using the cofactor NAD. The first reaction step involves the formation of a hemiacetal intermediate between G3P and a cysteine residue, and this hemiacetal intermediate is then oxidized to a thioester, with concomitant reduction of NAD to NADH. The reduced NADH is then exchanged with the second NAD, and the thioester is attacked by a nucleophilic inorganic phosphate to produce BPG. The chain is Glyceraldehyde-3-phosphate dehydrogenase 1 (gapA1) from Staphylococcus epidermidis (strain ATCC 35984 / DSM 28319 / BCRC 17069 / CCUG 31568 / BM 3577 / RP62A).